We begin with the raw amino-acid sequence, 447 residues long: GTPase Der (447 aa).

2 EngA-type G domains span residues Gln4–Glu165 and Leu180–Asn357. Residues Gly10–Ser17, Asp57–Leu61, Asn119–Glu122, Gly186–Ser193, Asp233–Leu237, and Asn298–Asp301 contribute to the GTP site. The region spanning Lys358 to Lys443 is the KH-like domain.

This sequence belongs to the TRAFAC class TrmE-Era-EngA-EngB-Septin-like GTPase superfamily. EngA (Der) GTPase family. As to quaternary structure, associates with the 50S ribosomal subunit.

Functionally, GTPase that plays an essential role in the late steps of ribosome biogenesis. This Rickettsia rickettsii (strain Sheila Smith) protein is GTPase Der.